Here is a 459-residue protein sequence, read N- to C-terminus: MSNRFAVILAAGKGTRMKSKLYKVLHPVCGKPMVQHVVDQVSQLGLQKLVTVVGHGAEMVQEQLGNVSEFALQAEQLGTAHAVDQAASVLANEEGTTLVICGDTPLITAETMEALLQQHKEAGAMATVLTAYIEEPAGYGRIVRNENGHVEKIVEHKDANEKELAIKEINTGTYCFDNKALFASLSKVSNDNVQGEYYLPDVIEILKNEGHIVSAYQTEQFDETLGVNDRVALSQAEIIMKNRINRKNMVNGVTIIDPSNTYISADAIIGSDTVLHPGTIIEGNTVIGSDCEIGPHTVIRDSEIGDRTTIRQSTVHDSKLGTEVSVGPFAHIRPDSVIGDEVRVGNFVEIKKTVFGNRSKASHLSYIGDAQVGEDVNLGCGSITVNYDGKNKFKTVIGNGVFIGCNSNLVAPVTVEDGAYVAAGSTITENVPSKALSVARARQVNKEDYVDQLLNKKKS.

A pyrophosphorylase region spans residues 1–230 (MSNRFAVILA…FDETLGVNDR (230 aa)). Residues 9 to 12 (LAAG), K23, Q73, and 78 to 79 (GT) each bind UDP-N-acetyl-alpha-D-glucosamine. Mg(2+) is bound at residue D103. G140, E155, N170, and N228 together coordinate UDP-N-acetyl-alpha-D-glucosamine. N228 serves as a coordination point for Mg(2+). Residues 231-251 (VALSQAEIIMKNRINRKNMVN) are linker. The segment at 252–459 (GVTIIDPSNT…VDQLLNKKKS (208 aa)) is N-acetyltransferase. The UDP-N-acetyl-alpha-D-glucosamine site is built by R333 and K351. Catalysis depends on H363, which acts as the Proton acceptor. UDP-N-acetyl-alpha-D-glucosamine contacts are provided by Y366 and N377. Residues 386 to 387 (NY), A423, and R440 contribute to the acetyl-CoA site.

This sequence in the N-terminal section; belongs to the N-acetylglucosamine-1-phosphate uridyltransferase family. The protein in the C-terminal section; belongs to the transferase hexapeptide repeat family. In terms of assembly, homotrimer. It depends on Mg(2+) as a cofactor.

It is found in the cytoplasm. It carries out the reaction alpha-D-glucosamine 1-phosphate + acetyl-CoA = N-acetyl-alpha-D-glucosamine 1-phosphate + CoA + H(+). The enzyme catalyses N-acetyl-alpha-D-glucosamine 1-phosphate + UTP + H(+) = UDP-N-acetyl-alpha-D-glucosamine + diphosphate. It participates in nucleotide-sugar biosynthesis; UDP-N-acetyl-alpha-D-glucosamine biosynthesis; N-acetyl-alpha-D-glucosamine 1-phosphate from alpha-D-glucosamine 6-phosphate (route II): step 2/2. The protein operates within nucleotide-sugar biosynthesis; UDP-N-acetyl-alpha-D-glucosamine biosynthesis; UDP-N-acetyl-alpha-D-glucosamine from N-acetyl-alpha-D-glucosamine 1-phosphate: step 1/1. Its pathway is bacterial outer membrane biogenesis; LPS lipid A biosynthesis. Functionally, catalyzes the last two sequential reactions in the de novo biosynthetic pathway for UDP-N-acetylglucosamine (UDP-GlcNAc). The C-terminal domain catalyzes the transfer of acetyl group from acetyl coenzyme A to glucosamine-1-phosphate (GlcN-1-P) to produce N-acetylglucosamine-1-phosphate (GlcNAc-1-P), which is converted into UDP-GlcNAc by the transfer of uridine 5-monophosphate (from uridine 5-triphosphate), a reaction catalyzed by the N-terminal domain. This chain is Bifunctional protein GlmU, found in Bacillus cereus (strain G9842).